Reading from the N-terminus, the 367-residue chain is Phosphoribosylaminoimidazole-succinocarboxamide synthase (367 aa).

Belongs to the SAICAR synthetase family.

The enzyme catalyses 5-amino-1-(5-phospho-D-ribosyl)imidazole-4-carboxylate + L-aspartate + ATP = (2S)-2-[5-amino-1-(5-phospho-beta-D-ribosyl)imidazole-4-carboxamido]succinate + ADP + phosphate + 2 H(+). The protein operates within purine metabolism; IMP biosynthesis via de novo pathway; 5-amino-1-(5-phospho-D-ribosyl)imidazole-4-carboxamide from 5-amino-1-(5-phospho-D-ribosyl)imidazole-4-carboxylate: step 1/2. The chain is Phosphoribosylaminoimidazole-succinocarboxamide synthase from Shewanella baltica (strain OS155 / ATCC BAA-1091).